The sequence spans 78 residues: Large ribosomal subunit protein bL28 (78 aa).

The protein belongs to the bacterial ribosomal protein bL28 family.

The chain is Large ribosomal subunit protein bL28 from Glaesserella parasuis serovar 5 (strain SH0165) (Haemophilus parasuis).